A 299-amino-acid polypeptide reads, in one-letter code: MAAAEEGCGVGVEDDRELEELLESALDDFDKAKPSPEHAPTISAPDASGPQKRAPGDTAKDALFASQEKFFQELFDSELASQATAEFEKAMKELAEEEPHLVEQFQKLSEAAGRVGSDASSQQEFTSCLKETLSGLAKNATELQNSGMSEEELMKAMEGLGMDEGDGEASILPIMQSIMQNLLSKDVLYPSLKEITEKYPEWLQSHQDSTPPEQFEKYQQQHSVMVKICEQFEAETPTDSEATQRARFEAMLDLMQQLQALGHPPKELAGEMPPGLNFDLDALNLSGPPGANGEQCLIM.

The disordered stretch occupies residues 1–61 (MAAAEEGCGV…KRAPGDTAKD (61 aa)). Alanine 2 bears the N-acetylalanine mark. The interval 2 to 56 (AAAEEGCGVGVEDDRELEELLESALDDFDKAKPSPEHAPTISAPDASGPQKRAPG) is docking to the peroxisome membrane and binding to PEX3. A necessary for PEX19 function on peroxisome biogenesis region spans residues 2–91 (AAAEEGCGVG…QATAEFEKAM (90 aa)). A compositionally biased stretch (acidic residues) spans 12-27 (VEDDRELEELLESALD). Phosphoserine occurs at positions 35 and 66. Threonine 236 carries the post-translational modification Phosphothreonine. Cysteine methyl ester is present on cysteine 296. The S-farnesyl cysteine moiety is linked to residue cysteine 296. Residues 297–299 (LIM) constitute a propeptide, removed in mature form.

Belongs to the peroxin-19 family. Interacts with a broad range of peroxisomal membrane proteins, including PEX3, PEX10, PEX11A, PEX11B, PEX12, PEX13, PEX14 and PEX16, PXMP2/PMP22, PXMP4/PMP24, SLC25A17/PMP34, ABCD1/ALDP, ABCD2/ALDRP, and ABCD3/PMP70. Also interacts with the tumor suppressor CDKN2A/p19ARF.

Its subcellular location is the cytoplasm. The protein resides in the peroxisome membrane. Necessary for early peroxisomal biogenesis. Acts both as a cytosolic chaperone and as an import receptor for peroxisomal membrane proteins (PMPs). Binds and stabilizes newly synthesized PMPs in the cytoplasm by interacting with their hydrophobic membrane-spanning domains, and targets them to the peroxisome membrane by binding to the integral membrane protein PEX3. Excludes CDKN2A from the nucleus and prevents its interaction with MDM2, which results in active degradation of TP53. The protein is Peroxisomal biogenesis factor 19 (Pex19) of Mus musculus (Mouse).